The primary structure comprises 332 residues: Glycerol-3-phosphate dehydrogenase [NAD(P)+] (332 aa).

Positions 11, 12, 32, and 106 each coordinate NADPH. Lys106, Gly137, and Ser139 together coordinate sn-glycerol 3-phosphate. Ala141 contacts NADPH. Sn-glycerol 3-phosphate is bound by residues Lys192, Asp245, Ser255, Arg256, and Asn257. Lys192 serves as the catalytic Proton acceptor. Arg256 contacts NADPH. NADPH is bound by residues Val280 and Glu282.

It belongs to the NAD-dependent glycerol-3-phosphate dehydrogenase family.

The protein localises to the cytoplasm. The enzyme catalyses sn-glycerol 3-phosphate + NAD(+) = dihydroxyacetone phosphate + NADH + H(+). The catalysed reaction is sn-glycerol 3-phosphate + NADP(+) = dihydroxyacetone phosphate + NADPH + H(+). It participates in membrane lipid metabolism; glycerophospholipid metabolism. In terms of biological role, catalyzes the reduction of the glycolytic intermediate dihydroxyacetone phosphate (DHAP) to sn-glycerol 3-phosphate (G3P), the key precursor for phospholipid synthesis. The sequence is that of Glycerol-3-phosphate dehydrogenase [NAD(P)+] from Staphylococcus haemolyticus (strain JCSC1435).